The sequence spans 603 residues: Conglutin beta 2 (603 aa).

Residues 1–30 (MANMRVKFPTLVLLLGIVFLMAVSIGIAYG) form the signal peptide. A compositionally biased stretch (basic and acidic residues) spans 36–105 (KNHERPQERE…REPSRGREQE (70 aa)). Disordered stretches follow at residues 36-177 (KNHE…RNPY), 343-363 (DGQE…DQGV), and 375-399 (LRKH…LRSD). Residues 137 to 147 (QGSSSSSGRQS) are compositionally biased toward low complexity. The span at 148 to 172 (GYERREQREEREQQQEQDSRSESRR) shows a compositional bias: basic and acidic residues. In terms of domain architecture, Cupin type-1 1 spans 177–335 (YYFSYERFQT…TFNTRYEEIQ (159 aa)). Over residues 381–393 (SSSGKGKPSESGP) the composition is skewed to low complexity. The 161-residue stretch at 394–554 (FNLRSDEPIY…TFPGSVEDVE (161 aa)) folds into the Cupin type-1 2 domain. Asn-504 carries N-linked (GlcNAc...) asparagine glycosylation. Residues 564 to 574 (YFANAQPQQQQ) show a composition bias toward low complexity. Positions 564–583 (YFANAQPQQQQQREKEGRRG) are disordered.

Belongs to the 7S seed storage protein family. As to quaternary structure, component of globulins complexes which accumulate in seeds.

Seed storage protein. Accumulates during seed development and is hydrolyzed after germination to provide a carbon and nitrogen source for the developing seedling. In Lupinus angustifolius (Narrow-leaved blue lupine), this protein is Conglutin beta 2.